The primary structure comprises 339 residues: MKVESVTKEETKKPERKIKLAIAKPEDYSNKNVILEKEEELICPVCGSKNIIKDYERAEIVCEMCGCVLQQNLFDVGPEWRAFDHEQRVKRSRVGAPMTYTIHDKGLSTVIDWRNKDSYGKDISADKRAQLYRLRKWQRRIRVSDASERNLAFALSELDRIASKLGLPRNVRENAAVLYRGAVEKGLIRGRSIEGVAAAALYAACRRCKVPRTLDEIAEVSRVDRKEIGRTYRFISRELNIRLAPTNPVDYVPRFASELKLPGEVESKAISILQKAGEKGLTSGRGPTGVAAAAIYIASVLQGTRRTQREVADVAGVTEVTIRNRYKELTEHLDIDVTL.

The TFIIB-type zinc finger occupies glutamate 39–glutamine 70. Zn(2+)-binding residues include cysteine 43, cysteine 46, cysteine 62, and cysteine 65. 2 repeat units span residues serine 156 to leucine 239 and aspartate 250 to glutamate 331.

The protein belongs to the TFIIB family.

Functionally, stabilizes TBP binding to an archaeal box-A promoter. Also responsible for recruiting RNA polymerase II to the pre-initiation complex (DNA-TBP-TFIIB). This Methanococcus maripaludis (strain C7 / ATCC BAA-1331) protein is Transcription initiation factor IIB.